The primary structure comprises 472 residues: GTPase Der (472 aa).

EngA-type G domains lie at 3 to 166 (AVIA…PPAE) and 178 to 351 (IPVA…AAAH). Residues 9-16 (GRPNVGKS), 56-60 (DTGGM), 118-121 (NKTD), 184-191 (GRPNVGKS), 231-235 (DTAGV), and 296-299 (NKWD) each bind GTP. In terms of domain architecture, KH-like spans 352–436 (RDLATPELND…PVRIECRASD (85 aa)). Positions 434–472 (ASDNPFADKPNQLTERQRRRRQRVIHHAKKREKKRKRRR) are disordered. Positions 450 to 472 (QRRRRQRVIHHAKKREKKRKRRR) are enriched in basic residues.

Belongs to the TRAFAC class TrmE-Era-EngA-EngB-Septin-like GTPase superfamily. EngA (Der) GTPase family. As to quaternary structure, associates with the 50S ribosomal subunit.

GTPase that plays an essential role in the late steps of ribosome biogenesis. The polypeptide is GTPase Der (Halorhodospira halophila (strain DSM 244 / SL1) (Ectothiorhodospira halophila (strain DSM 244 / SL1))).